The chain runs to 708 residues: Leukotoxin translocation ATP-binding protein LktB (708 aa).

The 126-residue stretch at 1 to 126 folds into the Peptidase C39 domain; it reads MEANHQRNDL…ACYQGQLILV (126 aa). In terms of domain architecture, ABC transmembrane type-1 spans 155 to 437; it reads FLETLIVSIF…LAQLWQDFQQ (283 aa). A run of 5 helical transmembrane segments spans residues 159–179, 192–212, 270–290, 296–316, and 389–409; these read LIVS…FQVV, LNII…LSGL, ALTS…MWYY, LVIL…SPIL, and VMVI…LSIG. The ABC transporter domain maps to 469 to 704; that stretch reads ISFKNIRFRY…SNGLYSYLHQ (236 aa). 503–510 is a binding site for ATP; the sequence is GRSGSGKS.

This sequence belongs to the ABC transporter superfamily. Protein-1 exporter (TC 3.A.1.109) family. In terms of assembly, homodimer.

Its subcellular location is the cell inner membrane. The enzyme catalyses ATP + H2O + proteinSide 1 = ADP + phosphate + proteinSide 2.. Part of the ABC transporter complex LktBD involved in leukotoxin export. Transmembrane domains (TMD) form a pore in the inner membrane and the ATP-binding domain (NBD) is responsible for energy generation. In Mannheimia haemolytica (Pasteurella haemolytica), this protein is Leukotoxin translocation ATP-binding protein LktB (lktB).